The following is a 287-amino-acid chain: 4-hydroxybenzoate octaprenyltransferase (287 aa).

Transmembrane regions (helical) follow at residues 23–40 (IGSL…WLAG), 99–119 (LFVV…TMTI), 141–161 (LPQF…YAAV), 163–183 (ESLP…TVAY), 213–233 (LIIG…GTMT), 235–255 (LGMP…YQQI), and 266–286 (FKAF…VLFG).

This sequence belongs to the UbiA prenyltransferase family. It depends on Mg(2+) as a cofactor.

It localises to the cell inner membrane. It catalyses the reaction all-trans-octaprenyl diphosphate + 4-hydroxybenzoate = 4-hydroxy-3-(all-trans-octaprenyl)benzoate + diphosphate. Its pathway is cofactor biosynthesis; ubiquinone biosynthesis. In terms of biological role, catalyzes the prenylation of para-hydroxybenzoate (PHB) with an all-trans polyprenyl group. Mediates the second step in the final reaction sequence of ubiquinone-8 (UQ-8) biosynthesis, which is the condensation of the polyisoprenoid side chain with PHB, generating the first membrane-bound Q intermediate 3-octaprenyl-4-hydroxybenzoate. The polypeptide is 4-hydroxybenzoate octaprenyltransferase (Pectobacterium carotovorum subsp. carotovorum (strain PC1)).